The primary structure comprises 514 residues: Cytochrome bd-II ubiquinol oxidase subunit 1 (514 aa).

The Cytoplasmic segment spans residues 1–22 (MWDVIDLSRWQFALTALYHFLF). Position 19 (H19) interacts with heme. Residues 23–42 (VPLTLGLIFLLAIMETIYVV) traverse the membrane as a helical segment. At 43-94 (TGKTIYRDMTRFWGKLFGINFALGVATGLTMEFQFGTNWSFYSNYVGDIFGA) the chain is on the periplasmic side. Residues 95 to 114 (PLAMEALMAFFLESTFVGLF) traverse the membrane as a helical segment. Topologically, residues 115-129 (FFGWQRLNKYQHLLV) are cytoplasmic. The helical transmembrane segment at 130–149 (TWLVAFGSNLSALWILNANG) threads the bilayer. Topologically, residues 150–187 (WMQYPTGAHFDIDTLRMEMTSFSELVFNPVSQVKFVHT) are periplasmic. A heme-binding site is contributed by H186. The chain crosses the membrane as a helical span at residues 188–207 (VMAGYVTGAMFIMAISAWYL). The Cytoplasmic segment spans residues 208–219 (LRGRERNVALRS). Residues 220-239 (FAIGSVFGTLAIIGTLQLGD) form a helical membrane-spanning segment. Over 240–392 (SSAYEVAQVQ…VAPVFWSFRI (153 aa)) the chain is Periplasmic. A heme-binding site is contributed by M393. The helical transmembrane segment at 393 to 412 (MVGCGSLLLLVMLIALVQTL) threads the bilayer. Topologically, residues 413 to 470 (RGKIDQHRWVLKMALWSLPLPWIAIEAGWFMTEFGRQPWAIQDILPTYSAHSALTTGQ) are cytoplasmic. Residues 471 to 490 (LAFSLIMIVGLYTLFLIAEV) form a helical membrane-spanning segment. At 491 to 514 (YLMQKYARLGPSAMQSEQPTQQQG) the chain is on the periplasmic side.

The protein belongs to the cytochrome ubiquinol oxidase subunit 1 family. Heterodimer of subunits I and II. Heme serves as cofactor. Post-translationally, the N-terminus is blocked.

The protein resides in the cell inner membrane. The enzyme catalyses 2 a ubiquinol + O2 + n H(+)(in) = 2 a ubiquinone + 2 H2O + n H(+)(out). Its pathway is energy metabolism; oxidative phosphorylation. Its activity is regulated as follows. Inhibited by cyanide; is more sensitive to cyanide than cytochrome bd-I oxidase. In terms of biological role, a terminal oxidase that catalyzes quinol-dependent, Na(+)-independent oxygen uptake. Prefers menadiol over other quinols although ubiquinol was not tested. Generates a proton motive force using protons and electrons from opposite sides of the membrane to generate H(2)O, transferring 1 proton/electron. This chain is Cytochrome bd-II ubiquinol oxidase subunit 1 (appC), found in Escherichia coli (strain K12).